The chain runs to 400 residues: uncharacterized protein (400 aa).

A TR mART core domain is found at asparagine 161 to leucine 380.

This is an uncharacterized protein from Acanthamoeba polyphaga (Amoeba).